A 244-amino-acid chain; its full sequence is ATP synthase subunit a, chloroplastic (244 aa).

The next 5 membrane-spanning stretches (helical) occupy residues 35–55, 92–112, 131–151, 196–216, and 217–237; these read QVLI…AIAV, VPFI…GALL, INTT…AGIT, LVVV…VMFL, and GLFT…AYIG.

It belongs to the ATPase A chain family. As to quaternary structure, F-type ATPases have 2 components, CF(1) - the catalytic core - and CF(0) - the membrane proton channel. CF(1) has five subunits: alpha(3), beta(3), gamma(1), delta(1), epsilon(1). CF(0) has four main subunits: a, b, b' and c.

It is found in the plastid. The protein localises to the chloroplast thylakoid membrane. Key component of the proton channel; it plays a direct role in the translocation of protons across the membrane. The polypeptide is ATP synthase subunit a, chloroplastic (Coffea arabica (Arabian coffee)).